A 282-amino-acid chain; its full sequence is Probable endonuclease 4 (282 aa).

Positions 69, 109, 145, 179, 182, 216, 229, 231, and 261 each coordinate Zn(2+).

Belongs to the AP endonuclease 2 family. Requires Zn(2+) as cofactor.

It carries out the reaction Endonucleolytic cleavage to 5'-phosphooligonucleotide end-products.. Its function is as follows. Endonuclease IV plays a role in DNA repair. It cleaves phosphodiester bonds at apurinic or apyrimidinic (AP) sites, generating a 3'-hydroxyl group and a 5'-terminal sugar phosphate. The polypeptide is Probable endonuclease 4 (Magnetococcus marinus (strain ATCC BAA-1437 / JCM 17883 / MC-1)).